A 110-amino-acid polypeptide reads, in one-letter code: UPF0060 membrane protein Ajs_2087 (110 aa).

The next 4 membrane-spanning stretches (helical) occupy residues 7–27, 33–53, 63–83, and 86–106; these read LALFLLTAVAEIVGCYLPWLW, SAWLLVPAAASLALFAWLLTL, AAYGGVYVAVALVWLWTVDGV, and GPWDWLGVAVTLCGMAIIAFA.

It belongs to the UPF0060 family.

It is found in the cell inner membrane. In Acidovorax sp. (strain JS42), this protein is UPF0060 membrane protein Ajs_2087.